Consider the following 382-residue polypeptide: Lipid-A-disaccharide synthase (382 aa).

It belongs to the LpxB family.

The catalysed reaction is 2-N,3-O-bis[(3R)-3-hydroxytetradecanoyl]-alpha-D-glucosaminyl 1-phosphate + UDP-2-N,3-O-bis[(3R)-3-hydroxytetradecanoyl]-alpha-D-glucosamine = lipid A disaccharide (E. coli) + UDP + H(+). It catalyses the reaction a lipid X + a UDP-2-N,3-O-bis[(3R)-3-hydroxyacyl]-alpha-D-glucosamine = a lipid A disaccharide + UDP + H(+). It participates in glycolipid biosynthesis; lipid IV(A) biosynthesis; lipid IV(A) from (3R)-3-hydroxytetradecanoyl-[acyl-carrier-protein] and UDP-N-acetyl-alpha-D-glucosamine: step 5/6. In terms of biological role, condensation of UDP-2,3-diacylglucosamine and 2,3-diacylglucosamine-1-phosphate to form lipid A disaccharide, a precursor of lipid A, a phosphorylated glycolipid that anchors the lipopolysaccharide to the outer membrane of the cell. The chain is Lipid-A-disaccharide synthase from Shigella dysenteriae serotype 1 (strain Sd197).